A 258-amino-acid chain; its full sequence is Caffeoyl-CoA O-methyltransferase 1 (258 aa).

Residues 1–16 (MATTATEAAPAQEQQA) show a composition bias toward low complexity. Positions 1–31 (MATTATEAAPAQEQQANGNGEQKTRHSEVGH) are disordered. Positions 22-31 (QKTRHSEVGH) are enriched in basic and acidic residues. A substrate-binding site is contributed by Lys-32. Residues Thr-74, Glu-96, 98 to 99 (GV), Ser-104, Asp-122, and Ala-151 each bind S-adenosyl-L-methionine. A substrate-binding site is contributed by Asp-174. Asp-174 is an a divalent metal cation binding site. S-adenosyl-L-methionine is bound at residue Asp-176. The a divalent metal cation site is built by Asp-200 and Asn-201. Asn-205 lines the substrate pocket.

Belongs to the class I-like SAM-binding methyltransferase superfamily. Cation-dependent O-methyltransferase family. CCoAMT subfamily. A divalent metal cation serves as cofactor.

The enzyme catalyses (E)-caffeoyl-CoA + S-adenosyl-L-methionine = (E)-feruloyl-CoA + S-adenosyl-L-homocysteine + H(+). The protein operates within aromatic compound metabolism; phenylpropanoid biosynthesis. In terms of biological role, methylates caffeoyl-CoA to feruloyl-CoA and 5-hydroxyferuloyl-CoA to sinapoyl-CoA. Plays a role in the synthesis of feruloylated polysaccharides. Involved in the reinforcement of the plant cell wall. Also involved in the responding to wounding or pathogen challenge by the increased formation of cell wall-bound ferulic acid polymers. The sequence is that of Caffeoyl-CoA O-methyltransferase 1 (CCOAOMT1) from Zea mays (Maize).